A 291-amino-acid polypeptide reads, in one-letter code: Popeye domain-containing protein 3 (291 aa).

Residue N4 is glycosylated (N-linked (GlcNAc...) asparagine). 3 helical membrane passes run G27–G44, F48–V70, and I77–V99.

It belongs to the popeye family. In terms of tissue distribution, expressed predominantly in skeletal muscle (at protein level). Also detected in heart.

It is found in the membrane. Its function is as follows. May play a role in the maintenance of heart function mediated, at least in part, through cAMP-binding. May play a role in the regulation of KCNK2/TREK-1-mediated current amplitude. The chain is Popeye domain-containing protein 3 (POPDC3) from Homo sapiens (Human).